The chain runs to 359 residues: Ribosomal RNA large subunit methyltransferase M (359 aa).

Residues Ser-186, 219–222, Asp-238, Asp-258, and Asp-275 each bind S-adenosyl-L-methionine; that span reads CPGG. The Proton acceptor role is filled by Lys-304.

Belongs to the class I-like SAM-binding methyltransferase superfamily. RNA methyltransferase RlmE family. RlmM subfamily. In terms of assembly, monomer.

It localises to the cytoplasm. The enzyme catalyses cytidine(2498) in 23S rRNA + S-adenosyl-L-methionine = 2'-O-methylcytidine(2498) in 23S rRNA + S-adenosyl-L-homocysteine + H(+). Its function is as follows. Catalyzes the 2'-O-methylation at nucleotide C2498 in 23S rRNA. This chain is Ribosomal RNA large subunit methyltransferase M, found in Vibrio parahaemolyticus serotype O3:K6 (strain RIMD 2210633).